Consider the following 471-residue polypeptide: Type 2 glycosyltransferase (471 aa).

A helical transmembrane segment spans residues 4–24 (ILGWFWAFVSAFVLRYLRTIV). Asparagine 29, asparagine 88, and asparagine 222 each carry an N-linked (GlcNAc...) asparagine glycan. 3 helical membrane passes run 305–325 (CLQT…FYSL), 339–359 (MAFT…KLWG), and 368–388 (VIYI…KFWG). N-linked (GlcNAc...) asparagine glycosylation occurs at asparagine 458.

The protein belongs to the GT2 glycosyltransferase family.

It localises to the cell membrane. In terms of biological role, glycosyltransferase involved in the maintenance of the outermost surface of the fungal cell wall. Likely functions in the synthesis of a currently unknown, potentially minor but widespread, extracellular or outer cell wall polysaccharide which plays a key role in facilitating many interactions between plants and fungi by enabling hyphal growth on solid matrices. This chain is Type 2 glycosyltransferase, found in Zymoseptoria tritici (strain CBS 115943 / IPO323) (Speckled leaf blotch fungus).